Here is a 229-residue protein sequence, read N- to C-terminus: Enolase-phosphatase E1 (229 aa).

The protein belongs to the HAD-like hydrolase superfamily. MasA/MtnC family. As to quaternary structure, monomer. It depends on Mg(2+) as a cofactor.

The catalysed reaction is 5-methylsulfanyl-2,3-dioxopentyl phosphate + H2O = 1,2-dihydroxy-5-(methylsulfanyl)pent-1-en-3-one + phosphate. It participates in amino-acid biosynthesis; L-methionine biosynthesis via salvage pathway; L-methionine from S-methyl-5-thio-alpha-D-ribose 1-phosphate: step 3/6. The protein operates within amino-acid biosynthesis; L-methionine biosynthesis via salvage pathway; L-methionine from S-methyl-5-thio-alpha-D-ribose 1-phosphate: step 4/6. Functionally, bifunctional enzyme that catalyzes the enolization of 2,3-diketo-5-methylthiopentyl-1-phosphate (DK-MTP-1-P) into the intermediate 2-hydroxy-3-keto-5-methylthiopentenyl-1-phosphate (HK-MTPenyl-1-P), which is then dephosphorylated to form the acireductone 1,2-dihydroxy-3-keto-5-methylthiopentene (DHK-MTPene). This chain is Enolase-phosphatase E1, found in Erwinia tasmaniensis (strain DSM 17950 / CFBP 7177 / CIP 109463 / NCPPB 4357 / Et1/99).